Consider the following 238-residue polypeptide: uncharacterized protein (238 aa).

Basic residues predominate over residues 1 to 10; sequence MARGQNIRKR. Disordered stretches follow at residues 1–26 and 195–238; these read MARGQNIRKRTFSDMDTPSDKNIGIH and LNTS…YDSF.

The protein belongs to the asfivirus DP238L family.

This is an uncharacterized protein from Ornithodoros (relapsing fever ticks).